The primary structure comprises 308 residues: Ribosomal RNA large subunit methyltransferase F (308 aa).

This sequence belongs to the methyltransferase superfamily. METTL16/RlmF family.

The protein localises to the cytoplasm. It catalyses the reaction adenosine(1618) in 23S rRNA + S-adenosyl-L-methionine = N(6)-methyladenosine(1618) in 23S rRNA + S-adenosyl-L-homocysteine + H(+). In terms of biological role, specifically methylates the adenine in position 1618 of 23S rRNA. In Escherichia coli O157:H7, this protein is Ribosomal RNA large subunit methyltransferase F.